The primary structure comprises 100 residues: MKFSKLSITLAVILTQAVFVLCGMKNEDFMEKGLESNELHDAIKKPVNSGKPDTERLLDCVLSRVCSSDANCCGLTPTCKMGLCVPKVGGLLGGLLGGIL.

The N-terminal stretch at 1–23 (MKFSKLSITLAVILTQAVFVLCG) is a signal peptide. A propeptide spanning residues 24–55 (MKNEDFMEKGLESNELHDAIKKPVNSGKPDTE) is cleaved from the precursor. Intrachain disulfides connect cysteine 60–cysteine 73, cysteine 66–cysteine 79, and cysteine 72–cysteine 84.

Belongs to the neurotoxin 15 family. 02 (omega-actx) subfamily. In terms of tissue distribution, expressed by the venom gland.

It is found in the secreted. Potent inhibitor of insect, but not mammalian, voltage-gated calcium channels (Cav). In Atrax sp. (strain Illawarra) (Funnel-web spider), this protein is Omega-hexatoxin-Asp2b.